Consider the following 254-residue polypeptide: tRNA (guanine-N(1)-)-methyltransferase (254 aa).

S-adenosyl-L-methionine-binding positions include G119 and 139–144; that span reads IGDFVL.

The protein belongs to the RNA methyltransferase TrmD family. Homodimer.

The protein localises to the cytoplasm. It carries out the reaction guanosine(37) in tRNA + S-adenosyl-L-methionine = N(1)-methylguanosine(37) in tRNA + S-adenosyl-L-homocysteine + H(+). Functionally, specifically methylates guanosine-37 in various tRNAs. The protein is tRNA (guanine-N(1)-)-methyltransferase of Dechloromonas aromatica (strain RCB).